A 347-amino-acid polypeptide reads, in one-letter code: Dihydroorotase (347 aa).

Zn(2+) is bound by residues His-13 and His-15. Residues 15–17 (HLR) and Asn-41 contribute to the substrate site. The Zn(2+) site is built by Lys-99, His-136, and His-174. Position 99 is an N6-carboxylysine (Lys-99). Position 136 (His-136) interacts with substrate. Leu-219 contacts substrate. Residue Asp-247 coordinates Zn(2+). The active site involves Asp-247. Substrate contacts are provided by His-251 and Ala-263.

The protein belongs to the metallo-dependent hydrolases superfamily. DHOase family. Class II DHOase subfamily. In terms of assembly, homodimer. Zn(2+) serves as cofactor.

It carries out the reaction (S)-dihydroorotate + H2O = N-carbamoyl-L-aspartate + H(+). Its pathway is pyrimidine metabolism; UMP biosynthesis via de novo pathway; (S)-dihydroorotate from bicarbonate: step 3/3. Functionally, catalyzes the reversible cyclization of carbamoyl aspartate to dihydroorotate. The chain is Dihydroorotase from Sinorhizobium medicae (strain WSM419) (Ensifer medicae).